The sequence spans 1092 residues: DNA polymerase II large subunit (1092 aa).

It belongs to the archaeal DNA polymerase II family. In terms of assembly, heterodimer of a large subunit and a small subunit.

It carries out the reaction DNA(n) + a 2'-deoxyribonucleoside 5'-triphosphate = DNA(n+1) + diphosphate. The catalysed reaction is Exonucleolytic cleavage in the 3'- to 5'-direction to yield nucleoside 5'-phosphates.. Its function is as follows. Possesses two activities: a DNA synthesis (polymerase) and an exonucleolytic activity that degrades single-stranded DNA in the 3'- to 5'-direction. Has a template-primer preference which is characteristic of a replicative DNA polymerase. The chain is DNA polymerase II large subunit (polC) from Methanothermobacter thermautotrophicus (strain ATCC 29096 / DSM 1053 / JCM 10044 / NBRC 100330 / Delta H) (Methanobacterium thermoautotrophicum).